Here is a 466-residue protein sequence, read N- to C-terminus: 3-isopropylmalate dehydratase large subunit (466 aa).

The [4Fe-4S] cluster site is built by C347, C407, and C410.

Belongs to the aconitase/IPM isomerase family. LeuC type 1 subfamily. As to quaternary structure, heterodimer of LeuC and LeuD. It depends on [4Fe-4S] cluster as a cofactor.

It catalyses the reaction (2R,3S)-3-isopropylmalate = (2S)-2-isopropylmalate. It functions in the pathway amino-acid biosynthesis; L-leucine biosynthesis; L-leucine from 3-methyl-2-oxobutanoate: step 2/4. Functionally, catalyzes the isomerization between 2-isopropylmalate and 3-isopropylmalate, via the formation of 2-isopropylmaleate. The sequence is that of 3-isopropylmalate dehydratase large subunit from Buchnera aphidicola subsp. Diuraphis noxia.